A 2696-amino-acid chain; its full sequence is Histone-lysine N-methyltransferase, H3 lysine-36 specific (2696 aa).

A Phosphoserine modification is found at Ser-117. Disordered stretches follow at residues 207–252 (MGSE…EKAA) and 281–311 (DPDS…PFCQ). A compositionally biased stretch (basic and acidic residues) spans 236 to 248 (QKNKQRNEVDGSN). Polar residues-rich tracts occupy residues 281 to 290 (DPDSSTSTLG) and 297 to 306 (GTSSSSTSQE). One can recognise a PWWP 1 domain in the interval 323–388 (VGDLIWAKFK…AGKAIVMFEG (66 aa)). 2 positions are modified to phosphoserine: Ser-483 and Ser-486. Residues 487 to 514 (ADEKEKPCAKSRARKSSDNPKRTSVKKG) are disordered. Phosphoserine is present on Ser-766. The disordered stretch occupies residues 872–891 (LGEDVSDSGTSKPSKPLLFS). Residue Lys-906 forms a Glycyl lysine isopeptide (Lys-Gly) (interchain with G-Cter in SUMO2) linkage. Disordered regions lie at residues 936–1035 (YRSP…DAFS), 1067–1093 (VLQG…PLQI), 1112–1134 (SKVK…NGKG), 1243–1272 (SIGD…SEKK), 1294–1344 (PKKK…EPPV), 1382–1428 (SPRP…KKGD), and 1480–1534 (KMQC…MQGE). Over residues 948 to 961 (SPVGVSKVLVSGGS) the composition is skewed to low complexity. Positions 971 to 982 (GTQNSANPSPSG) are enriched in polar residues. 3 stretches are compositionally biased toward basic and acidic residues: residues 1000-1017 (SDKR…DCVT), 1070-1090 (GDRE…KEDP), and 1112-1124 (SKVK…KISE). Basic and acidic residues predominate over residues 1300–1314 (KVQEQVHKVSSRCEE). Over residues 1323–1337 (SSAQNKQVDENSLIS) the composition is skewed to polar residues. Lys-1339 participates in a covalent cross-link: Glycyl lysine isopeptide (Lys-Gly) (interchain with G-Cter in SUMO2). Residue Ser-1510 is modified to Phosphoserine. Residues 1513 to 1523 (ETVEEGVEHDP) are compositionally biased toward basic and acidic residues. PHD-type zinc fingers lie at residues 1543–1589 (ENVC…CRTG), 1590–1646 (IHTC…CHAA), and 1707–1751 (VSWC…CKAG). Residues 1756-1818 (YREIVWVKVG…QARVFPYMEG (63 aa)) enclose the PWWP 2 domain. Residues 1890-1940 (SEIPRCNCKATDENPCGIDSECINRMLLYECHPTVCPAGGRCQNQCFSKRQ) enclose the AWS domain. The region spanning 1942–2059 (PEVEIFRTLQ…AGTELTFNYN (118 aa)) is the SET domain. S-adenosyl-L-methionine is bound by residues 1952–1954 (RGW), 1994–1997 (TNFY), 2020–2021 (NH), Asn-2065, and Lys-2071. Residues 2060-2066 (LECLGNG) are inhibits enzyme activity in the absence of bound histone. Positions 2066 to 2082 (GKTVCKCGAPNCSGFLG) constitute a Post-SET domain. Residues 2091 to 2111 (ATEEKSKKFKKKQQGKRRTQG) are disordered. Positions 2097-2108 (KKFKKKQQGKRR) are enriched in basic residues. The PHD-type 4; atypical zinc-finger motif lies at 2118–2165 (EDECFSCGDAGQLVSCKKPGCPKVYHADCLNLTKRPAGKWECPWHQCD). The segment at 2213 to 2422 (LEPGEIREYV…SLSQRLPPPE (210 aa)) is disordered. Residues 2222 to 2232 (VPPPVPLPPGP) show a composition bias toward pro residues. Residues 2281-2298 (RPLERTDSRPQPLDKVRD) are compositionally biased toward basic and acidic residues. A compositionally biased stretch (polar residues) spans 2303–2314 (GTKSQSLVSSQR). Low complexity predominate over residues 2330–2348 (SDKPSPVTSPSSSPSVRSQ). Ser-2369 bears the Phosphoserine mark. 2 stretches are compositionally biased toward polar residues: residues 2371–2381 (RPQSLEKTSVP) and 2394–2404 (ITSSPKPQTSD). The residue at position 2462 (Thr-2462) is a Phosphothreonine. 4 disordered regions span residues 2464-2499 (RQKE…GLGH), 2553-2575 (TQAS…QSPG), 2595-2616 (KSGQ…EEKK), and 2665-2696 (LGRG…SEQK). Ser-2471 is subject to Phosphoserine. Lys-2616 participates in a covalent cross-link: Glycyl lysine isopeptide (Lys-Gly) (interchain with G-Cter in SUMO2). The segment covering 2674–2686 (EQNTLPALNQAPS) has biased composition (polar residues).

Belongs to the class V-like SAM-binding methyltransferase superfamily. In terms of assembly, interacts with the ligand-binding domains of RARA and THRA in the absence of ligand; in the presence of ligand the interaction is severely disrupted but some binding still occurs. Interacts with the ligand-binding domains of RXRA and ESRRA only in the presence of ligand. Interacts with ZNF496. Interacts with AR DNA- and ligand-binding domains. Expressed in the fetal/adult brain, kidney, skeletal muscle, spleen, and the thymus, and faintly in the lung.

The protein resides in the nucleus. The protein localises to the chromosome. It carries out the reaction L-lysyl(36)-[histone H3] + 2 S-adenosyl-L-methionine = N(6),N(6)-dimethyl-L-lysyl(36)-[histone H3] + 2 S-adenosyl-L-homocysteine + 2 H(+). Histone methyltransferase that dimethylates Lys-36 of histone H3 (H3K36me2). Transcriptional intermediary factor capable of both negatively or positively influencing transcription, depending on the cellular context. This Homo sapiens (Human) protein is Histone-lysine N-methyltransferase, H3 lysine-36 specific (NSD1).